Here is a 165-residue protein sequence, read N- to C-terminus: V-type proton ATPase 16 kDa proteolipid subunit (165 aa).

The Lumenal portion of the chain corresponds to 1 to 10 (MSSVFSGDET). A helical membrane pass occupies residues 11–33 (APFFGFLGAAAALVFSCMGAAYG). Topologically, residues 34 to 55 (TAKSGVGVASMGVMRPELVMKS) are cytoplasmic. A helical transmembrane segment spans residues 56-76 (IVPVVMAGVLGIYGLIIAVII). At 77 to 95 (STGINPKAKPYFLFDGYAH) the chain is on the lumenal side. A helical transmembrane segment spans residues 96–117 (LSSGLACGLAGLAAGMAIGIVG). Residues 118–129 (DAGVRANAQQPK) are Cytoplasmic-facing. A helical membrane pass occupies residues 130-155 (LFVGMILILIFAEALALYGLIVGIIL). At 156-165 (SSRAGQSRAD) the chain is on the lumenal side.

Belongs to the V-ATPase proteolipid subunit family. In terms of assembly, V-ATPase is a heteromultimeric enzyme composed of a peripheral catalytic V1 complex (main components: subunits A, B, C, D, E, and F) attached to an integral membrane V0 proton pore complex (main component: the proteolipid protein; which is present as a hexamer that forms the proton-conducting pore).

The protein localises to the vacuole membrane. Functionally, proton-conducting pore forming subunit of the membrane integral V0 complex of vacuolar ATPase. V-ATPase is responsible for acidifying a variety of intracellular compartments in eukaryotic cells. In Avena sativa (Oat), this protein is V-type proton ATPase 16 kDa proteolipid subunit (VATP-P1).